Reading from the N-terminus, the 454-residue chain is Cholesterol 7-desaturase nvd (454 aa).

The next 2 helical transmembrane spans lie at 13–33 (VLCP…LGAG) and 47–67 (TTLS…LWGW). The Rieske domain maps to 117 to 221 (WYRALDSHLL…SCELNGMVFV (105 aa)). Positions 158, 160, 178, and 181 each coordinate [2Fe-2S] cluster.

Belongs to the cholesterol 7-desaturase family. It depends on [2Fe-2S] cluster as a cofactor.

Its subcellular location is the membrane. It catalyses the reaction cholesterol + NADPH + O2 + H(+) = 7-dehydrocholesterol + NADP(+) + 2 H2O. The catalysed reaction is cholesterol + NADH + O2 + H(+) = 7-dehydrocholesterol + NAD(+) + 2 H2O. The protein operates within steroid hormone biosynthesis; dafachronic acid biosynthesis. Its function is as follows. Catalyzes the production of 7-dehydrocholesterol (7-DHC or cholesta-5,7-dien-3beta-ol) by inserting a double bond (desaturating) at the C7-C8 single bond of cholesterol. This reaction is the first step in the synthesis of the steroid hormone Delta(7)-dafachronic acid. This Xenopus laevis (African clawed frog) protein is Cholesterol 7-desaturase nvd (nvd).